The chain runs to 523 residues: ATP synthase subunit alpha (523 aa).

173 to 180 (GDRQTGKT) serves as a coordination point for ATP.

The protein belongs to the ATPase alpha/beta chains family. As to quaternary structure, F-type ATPases have 2 components, CF(1) - the catalytic core - and CF(0) - the membrane proton channel. CF(1) has five subunits: alpha(3), beta(3), gamma(1), delta(1), epsilon(1). CF(0) has three main subunits: a(1), b(2) and c(9-12). The alpha and beta chains form an alternating ring which encloses part of the gamma chain. CF(1) is attached to CF(0) by a central stalk formed by the gamma and epsilon chains, while a peripheral stalk is formed by the delta and b chains.

It localises to the cell membrane. The enzyme catalyses ATP + H2O + 4 H(+)(in) = ADP + phosphate + 5 H(+)(out). In terms of biological role, produces ATP from ADP in the presence of a proton gradient across the membrane. The alpha chain is a regulatory subunit. The polypeptide is ATP synthase subunit alpha (Streptomyces griseus subsp. griseus (strain JCM 4626 / CBS 651.72 / NBRC 13350 / KCC S-0626 / ISP 5235)).